A 340-amino-acid chain; its full sequence is MNKMSPLYVLALCCLATTVFAKYDCTNNGGYGCKYGGTCHFYGFCICPKGFQGEDCGLKTELISTAANCTAECKNGGTCYESDRCYCPHGFIGDMCEIPDTVARCAPDRMIIEAYRPLGFVGEVYMFQNRKSCALKQVPSDIRDMMKLERVVLHSDKTECALTRTPDTPKLGDVTMKTTVVSTHNYNQFGPRDSIMDVSCVHTNSFQGSTKEITETAFPFRMVALDMNGEPVQALAANESIILQFEPVGIPDVRGVMVEYLEVYSINANSNEVVSKTIIENGCVLRTAQQHLEIPIRNYSEMXRQGTSWVARSAMRAFILLPGDHCYSSLDYASVPEVPR.

Positions 1–21 (MNKMSPLYVLALCCLATTVFA) are cleaved as a signal peptide. 2 consecutive EGF-like domains span residues 22–57 (KYDCTNNGGYGCKYGGTCHFYGFCICPKGFQGEDCG) and 65–97 (TAANCTAECKNGGTCYESDRCYCPHGFIGDMCE). Cystine bridges form between Cys25-Cys39, Cys33-Cys45, Cys47-Cys56, Cys69-Cys79, Cys73-Cys85, and Cys87-Cys96.

As to expression, component of the organic matrix of calcified shell layers.

The protein is Gigasin-2 of Magallana gigas (Pacific oyster).